Here is a 422-residue protein sequence, read N- to C-terminus: Choline monooxygenase, chloroplastic (422 aa).

A chloroplast-targeting transit peptide spans 1–47 (MMTTLTATVPEFLPPSLKSTRGYFNSHSEFGVSISKFSRRRFHNPTR). In terms of domain architecture, Rieske spans 96-203 (WQAVGYSDQI…VAVWGPFVLL (108 aa)). [2Fe-2S] cluster-binding residues include C138, H140, C157, and H160. The Fe cation site is built by H269 and H274.

It belongs to the choline monooxygenase family. It depends on [2Fe-2S] cluster as a cofactor. The cofactor is Fe cation. Requires Mg(2+) as cofactor.

It localises to the plastid. The protein resides in the chloroplast stroma. The enzyme catalyses choline + 2 reduced [2Fe-2S]-[ferredoxin] + O2 + 2 H(+) = betaine aldehyde hydrate + 2 oxidized [2Fe-2S]-[ferredoxin] + H2O. Its pathway is amine and polyamine biosynthesis; betaine biosynthesis via choline pathway; betaine aldehyde from choline (monooxygenase route): step 1/1. Its function is as follows. Catalyzes the first step of the osmoprotectant glycine betaine synthesis. The protein is Choline monooxygenase, chloroplastic of Arabidopsis thaliana (Mouse-ear cress).